The sequence spans 299 residues: 4-diphosphocytidyl-2-C-methyl-D-erythritol kinase (299 aa).

Lysine 11 is a catalytic residue. ATP is bound at residue proline 94 to serine 104. The active site involves aspartate 136.

This sequence belongs to the GHMP kinase family. IspE subfamily.

The enzyme catalyses 4-CDP-2-C-methyl-D-erythritol + ATP = 4-CDP-2-C-methyl-D-erythritol 2-phosphate + ADP + H(+). It participates in isoprenoid biosynthesis; isopentenyl diphosphate biosynthesis via DXP pathway; isopentenyl diphosphate from 1-deoxy-D-xylulose 5-phosphate: step 3/6. Functionally, catalyzes the phosphorylation of the position 2 hydroxy group of 4-diphosphocytidyl-2C-methyl-D-erythritol. The protein is 4-diphosphocytidyl-2-C-methyl-D-erythritol kinase of Bordetella bronchiseptica (strain ATCC BAA-588 / NCTC 13252 / RB50) (Alcaligenes bronchisepticus).